The primary structure comprises 616 residues: Dihydroxy-acid dehydratase (616 aa).

Residue Asp-81 participates in Mg(2+) binding. Residue Cys-122 participates in [2Fe-2S] cluster binding. Asp-123 and Lys-124 together coordinate Mg(2+). Lys-124 is modified (N6-carboxylysine). Cys-195 contacts [2Fe-2S] cluster. Glu-491 provides a ligand contact to Mg(2+). The active-site Proton acceptor is the Ser-517.

This sequence belongs to the IlvD/Edd family. Homodimer. [2Fe-2S] cluster is required as a cofactor. Requires Mg(2+) as cofactor.

It carries out the reaction (2R)-2,3-dihydroxy-3-methylbutanoate = 3-methyl-2-oxobutanoate + H2O. The catalysed reaction is (2R,3R)-2,3-dihydroxy-3-methylpentanoate = (S)-3-methyl-2-oxopentanoate + H2O. It participates in amino-acid biosynthesis; L-isoleucine biosynthesis; L-isoleucine from 2-oxobutanoate: step 3/4. Its pathway is amino-acid biosynthesis; L-valine biosynthesis; L-valine from pyruvate: step 3/4. Functionally, functions in the biosynthesis of branched-chain amino acids. Catalyzes the dehydration of (2R,3R)-2,3-dihydroxy-3-methylpentanoate (2,3-dihydroxy-3-methylvalerate) into 2-oxo-3-methylpentanoate (2-oxo-3-methylvalerate) and of (2R)-2,3-dihydroxy-3-methylbutanoate (2,3-dihydroxyisovalerate) into 2-oxo-3-methylbutanoate (2-oxoisovalerate), the penultimate precursor to L-isoleucine and L-valine, respectively. This Klebsiella pneumoniae subsp. pneumoniae (strain ATCC 700721 / MGH 78578) protein is Dihydroxy-acid dehydratase.